A 261-amino-acid polypeptide reads, in one-letter code: MNRIDGREFNELRPIKITRNFNKFAEGSVLIEMGNTKVICTASIEDKVPPFQKGTGKGWITSEYGMLPRATETRNPREVTKGRPSGRTMEIQRLIGRSLRSVVDLDVLGEKTIWIDCDVIQADGGTRTASITGSFIALADALNKLVEKGDIPKIPLKGFVAAVSVGIVEGNELLDLSFQEDSNALVDMNVVMTDKGEIVEIQGTGEGGPFTKQNLTDLLSLAEYGIEQIIKIQKEVLSDIVDKIGVDSVENNNSNPQSSQN.

Residues R87 and 125–127 (GTR) contribute to the phosphate site.

It belongs to the RNase PH family. As to quaternary structure, homohexameric ring arranged as a trimer of dimers.

The catalysed reaction is tRNA(n+1) + phosphate = tRNA(n) + a ribonucleoside 5'-diphosphate. Its function is as follows. Phosphorolytic 3'-5' exoribonuclease that plays an important role in tRNA 3'-end maturation. Removes nucleotide residues following the 3'-CCA terminus of tRNAs; can also add nucleotides to the ends of RNA molecules by using nucleoside diphosphates as substrates, but this may not be physiologically important. Probably plays a role in initiation of 16S rRNA degradation (leading to ribosome degradation) during starvation. The polypeptide is Ribonuclease PH (Thermoanaerobacter pseudethanolicus (strain ATCC 33223 / 39E) (Clostridium thermohydrosulfuricum)).